The sequence spans 110 residues: Large ribosomal subunit protein eL34 (110 aa).

Residues 1-41 (MKNVLIHKGATYKTRSNRRRKVRTPSGKLVNRRVKKHSKKH) form a disordered region. The span at 30–41 (VNRRVKKHSKKH) shows a compositional bias: basic residues.

The protein belongs to the eukaryotic ribosomal protein eL34 family.

The chain is Large ribosomal subunit protein eL34 (RPL34) from Encephalitozoon cuniculi (strain GB-M1) (Microsporidian parasite).